The primary structure comprises 117 residues: Neurotoxic enhancer CSTX-13 (117 aa).

Residues Met1–Ala20 form the signal peptide. A propeptide spanning residues Glu21–Arg47 is cleaved from the precursor. 4 disulfide bridges follow: Cys50-Cys65, Cys57-Cys74, Cys64-Cys95, and Cys76-Cys93. The propeptide occupies Arg82–Arg87. Position 116 is a threonine amide (Thr116).

The protein belongs to the neurotoxin 19 (CSTX) family. 12 subfamily. Heterodimer of A and B chains; disulfide-linked. Interacts with CSTX-1 (AC P81694) (Kd=430 nM), and with CSTX-9 (AC P58604) (Kd=370 nM). In terms of tissue distribution, expressed by the venom gland.

It is found in the secreted. Its subcellular location is the target cell membrane. Its function is as follows. Synergistic toxin that induces or increases a cytolytic effect when combined with CSTX-1 (AC P81694) or CSTX-9 (AC P58604). When alone, has a weak insecticidal activity, with an unknown molecular target. The sequence is that of Neurotoxic enhancer CSTX-13 from Cupiennius salei (American wandering spider).